A 323-amino-acid polypeptide reads, in one-letter code: Serine acetyltransferase 2 (323 aa).

The disordered stretch occupies residues 302-323 (AQSNGPSLSAGDTEKGHTNSTS). Basic and acidic residues predominate over residues 313-323 (DTEKGHTNSTS).

This sequence belongs to the transferase hexapeptide repeat family. In terms of assembly, homomultimer. In terms of tissue distribution, ubiquitously expressed at low levels. Localized in vascular tissues, particularly in phloem.

It localises to the cytoplasm. The enzyme catalyses L-serine + acetyl-CoA = O-acetyl-L-serine + CoA. It participates in amino-acid biosynthesis; L-cysteine biosynthesis; L-cysteine from L-serine: step 1/2. This Arabidopsis thaliana (Mouse-ear cress) protein is Serine acetyltransferase 2.